We begin with the raw amino-acid sequence, 1172 residues long: Lysylphosphatidylglycerol biosynthesis bifunctional protein LysX (1172 aa).

Positions 1–34 are disordered; that stretch reads MGLHLTVPGLRRDGRGVQSNSHDTSSKTTADISR. Residues 1–663 are phosphatidylglycerol lysyltransferase; that stretch reads MGLHLTVPGL…LLHHDGSAPD (663 aa). Positions 17–31 are enriched in polar residues; it reads VQSNSHDTSSKTTAD. 7 helical membrane-spanning segments follow: residues 80–100, 122–142, 146–166, 177–197, 214–234, 272–292, and 612–632; these read VPAA…LASV, FPDT…ALTA, IAWL…AAEI, FGEN…VLGY, AVWL…VELF, AIFG…LFLS, and VIPR…LPFS. The lysine--tRNA ligase stretch occupies residues 664 to 1172; that stretch reads VSGLRQVGLT…TLPFPLAKPH (509 aa). A DNA-binding region (OB) is located at residues 726 to 804; sequence VSVSGRIMRI…SLIVSGWRLI (79 aa). Residues aspartate 1084 and glutamate 1091 each contribute to the Mg(2+) site.

This sequence in the N-terminal section; belongs to the LPG synthetase family. In the C-terminal section; belongs to the class-II aminoacyl-tRNA synthetase family. Mg(2+) serves as cofactor.

The protein resides in the cell membrane. The catalysed reaction is tRNA(Lys) + L-lysine + ATP = L-lysyl-tRNA(Lys) + AMP + diphosphate. The enzyme catalyses L-lysyl-tRNA(Lys) + a 1,2-diacyl-sn-glycero-3-phospho-(1'-sn-glycerol) = a 1,2-diacyl-sn-glycero-3-phospho-1'-(3'-O-L-lysyl)-sn-glycerol + tRNA(Lys). Functionally, catalyzes the production of L-lysyl-tRNA(Lys)transfer and the transfer of a lysyl group from L-lysyl-tRNA(Lys) to membrane-bound phosphatidylglycerol (PG), which produces lysylphosphatidylglycerol (LPG), one of the components of the bacterial membrane with a positive net charge. LPG synthesis contributes to the resistance to cationic antimicrobial peptides (CAMPs) and likely protects M.tuberculosis against the CAMPs produced by competiting microorganisms (bacteriocins). In fact, the modification of anionic phosphatidylglycerol with positively charged L-lysine results in repulsion of the peptides. The polypeptide is Lysylphosphatidylglycerol biosynthesis bifunctional protein LysX (lysX) (Mycobacterium bovis (strain ATCC BAA-935 / AF2122/97)).